We begin with the raw amino-acid sequence, 108 residues long: uncharacterized protein (108 aa).

Residues 81-108 (FKCLDSPPPVPPSSSQGEDEENTVDSQY) form a disordered region. Over residues 97–108 (GEDEENTVDSQY) the composition is skewed to acidic residues.

This is an uncharacterized protein from Saccharomyces cerevisiae (strain ATCC 204508 / S288c) (Baker's yeast).